A 160-amino-acid chain; its full sequence is Cytochrome b6-f complex subunit 4 (160 aa).

A run of 3 helical transmembrane segments spans residues 36–56 (LLYI…GLAV), 95–115 (LLGV…PFLE), and 131–151 (TVFL…ALPI).

Belongs to the cytochrome b family. PetD subfamily. The 4 large subunits of the cytochrome b6-f complex are cytochrome b6, subunit IV (17 kDa polypeptide, petD), cytochrome f and the Rieske protein, while the 4 small subunits are petG, petL, petM and petN. The complex functions as a dimer.

The protein localises to the plastid. It localises to the chloroplast thylakoid membrane. Functionally, component of the cytochrome b6-f complex, which mediates electron transfer between photosystem II (PSII) and photosystem I (PSI), cyclic electron flow around PSI, and state transitions. This chain is Cytochrome b6-f complex subunit 4, found in Physcomitrium patens (Spreading-leaved earth moss).